We begin with the raw amino-acid sequence, 382 residues long: RNA binding protein fox-1 homolog 1 (382 aa).

Residues 1 to 121 (MNCEREQLRG…NKSQPKRLHV (121 aa)) are disordered. Residues 70–87 (QTHSEQSPADTSAQTVSG) show a composition bias toward polar residues. Over residues 88–99 (TATQTDDAAPTD) the composition is skewed to low complexity. The span at 100–113 (GQPQTQPSENTENK) shows a compositional bias: polar residues. The region spanning 117–193 (KRLHVSNIPF…RKIEVNNATA (77 aa)) is the RRM domain. An Asymmetric dimethylarginine modification is found at R317. The disordered stretch occupies residues 357-382 (MPQGSSPSTDFRGAKLHTSRPLLSGS).

Binds to the C-terminus of ATXN2.

Its subcellular location is the nucleus. It is found in the cytoplasm. In terms of biological role, RNA-binding protein that regulates alternative splicing events by binding to 5'-UGCAUGU-3' elements. Prevents binding of U2AF2 to the 3'-splice site. Regulates alternative splicing of tissue-specific exons and of differentially spliced exons during erythropoiesis. This Pongo abelii (Sumatran orangutan) protein is RNA binding protein fox-1 homolog 1 (RBFOX1).